We begin with the raw amino-acid sequence, 1675 residues long: Coadhesin (1675 aa).

Topologically, residues 1-1356 (QGNYYSYGGT…TIADQADAAK (1356 aa)) are extracellular. In terms of domain architecture, F5/8 type C 1 spans 11 to 160 (TPGTPIGCTN…ICMRVGVESC (150 aa)). TSP type-1 domains lie at 168-220 (NGAW…NDCV), 224-279 (NGGW…QFCP), 281-336 (DGGW…QCCP), 338-393 (HGGW…QTCP), 403-458 (NGNY…IPCP), 460-515 (NGNW…TACP), and 517-572 (DGGW…GPCP). 21 cysteine pairs are disulfide-bonded: C180-C216, C184-C219, C194-C206, C236-C273, C240-C278, C251-C263, C293-C330, C297-C335, C308-C320, C350-C387, C354-C392, C365-C377, C415-C452, C419-C457, C430-C442, C472-C509, C476-C514, C487-C499, C528-C566, C532-C571, and C543-C555. A disordered region spans residues 567 to 588 (NKGPCPTSPPTISPPTTGSPAD). 3 VWFA domains span residues 595–769 (DLVF…MDRI), 778–958 (DIGF…FKAL), and 966–1141 (DLTF…ISII). In terms of domain architecture, TSP type-1 8 spans 1144 to 1198 (PSGLSKWSSWSACSKTCRYLGKAGTQIRTRDCKIPELGCDGMRIDTVECNKMDCE). 3 disulfides stabilise this stretch: C1156–C1192, C1160–C1197, and C1175–C1182. The 145-residue stretch at 1192–1336 (CNKMDCEGCG…PCMQAAVFGC (145 aa)) folds into the F5/8 type C 2 domain. The helical transmembrane segment at 1357-1377 (GILIVLWILAGILTFLLLMAC) threads the bilayer. Residues 1378–1675 (CYYCCWHVCC…RGEEWYSRWG (298 aa)) are Cytoplasmic-facing. Residues 1463-1480 (EKHVTAEDVKSEKPKYSE) show a composition bias toward basic and acidic residues. The segment at 1463-1491 (EKHVTAEDVKSEKPKYSEEASSGTIKSGS) is disordered. The segment covering 1481–1491 (EASSGTIKSGS) has biased composition (polar residues).

As to expression, component of the acid-insoluble and acid-soluble organic matrix of the aragonitic skeleton (at protein level).

It is found in the membrane. The protein is Coadhesin of Acropora millepora (Staghorn coral).